The following is a 270-amino-acid chain: Phosphonoacetaldehyde hydrolase (270 aa).

The Nucleophile role is filled by D11. Mg(2+)-binding residues include D11 and A13. The Schiff-base intermediate with substrate role is filled by K53. D187 contributes to the Mg(2+) binding site.

It belongs to the HAD-like hydrolase superfamily. PhnX family. Homodimer. It depends on Mg(2+) as a cofactor.

The catalysed reaction is phosphonoacetaldehyde + H2O = acetaldehyde + phosphate + H(+). Involved in phosphonate degradation. This Salmonella paratyphi C (strain RKS4594) protein is Phosphonoacetaldehyde hydrolase.